The following is a 276-amino-acid chain: ESX-2 secretion-associated protein EspG2 (276 aa).

This sequence belongs to the EspG family. As to quaternary structure, interacts specifically with ESX-2-dependent PE/PPE proteins.

The protein localises to the cytoplasm. Functionally, specific chaperone for cognate PE/PPE proteins. Plays an important role in preventing aggregation of PE/PPE dimers. This Mycobacterium tuberculosis (strain CDC 1551 / Oshkosh) protein is ESX-2 secretion-associated protein EspG2.